A 274-amino-acid polypeptide reads, in one-letter code: Penicillin-insensitive murein endopeptidase (274 aa).

A signal peptide spans 1–19 (MKNTVIALLALLASAGSLA). Cystine bridges form between cysteine 44-cysteine 265, cysteine 187-cysteine 235, and cysteine 216-cysteine 223. Positions 110, 113, 120, 147, 150, and 211 each coordinate Zn(2+). A disordered region spans residues 224-263 (EDQAPPPPGDGCGAELQSWFEPPKPGSTPPVKKTPPPLPP). Positions 245–263 (PPKPGSTPPVKKTPPPLPP) are enriched in pro residues.

The protein belongs to the peptidase M74 family. Dimer. Zn(2+) is required as a cofactor.

It is found in the periplasm. Functionally, murein endopeptidase that cleaves the D-alanyl-meso-2,6-diamino-pimelyl amide bond that connects peptidoglycan strands. Likely plays a role in the removal of murein from the sacculus. This is Penicillin-insensitive murein endopeptidase from Klebsiella pneumoniae subsp. pneumoniae (strain ATCC 700721 / MGH 78578).